We begin with the raw amino-acid sequence, 496 residues long: UDP-N-acetylmuramoyl-L-alanyl-D-glutamate--2,6-diaminopimelate ligase (496 aa).

Ser-32 serves as a coordination point for UDP-N-acetyl-alpha-D-muramoyl-L-alanyl-D-glutamate. 116–122 (GTNGKTT) provides a ligand contact to ATP. UDP-N-acetyl-alpha-D-muramoyl-L-alanyl-D-glutamate-binding positions include 158 to 159 (TT), Ser-185, Gln-191, and Arg-193. Residue Lys-225 is modified to N6-carboxylysine. Meso-2,6-diaminopimelate-binding positions include Arg-389, 413–416 (DNPR), Gly-464, and Glu-468. Residues 413 to 416 (DNPR) carry the Meso-diaminopimelate recognition motif motif.

It belongs to the MurCDEF family. MurE subfamily. It depends on Mg(2+) as a cofactor. Carboxylation is probably crucial for Mg(2+) binding and, consequently, for the gamma-phosphate positioning of ATP.

The protein resides in the cytoplasm. It catalyses the reaction UDP-N-acetyl-alpha-D-muramoyl-L-alanyl-D-glutamate + meso-2,6-diaminopimelate + ATP = UDP-N-acetyl-alpha-D-muramoyl-L-alanyl-gamma-D-glutamyl-meso-2,6-diaminopimelate + ADP + phosphate + H(+). Its pathway is cell wall biogenesis; peptidoglycan biosynthesis. Functionally, catalyzes the addition of meso-diaminopimelic acid to the nucleotide precursor UDP-N-acetylmuramoyl-L-alanyl-D-glutamate (UMAG) in the biosynthesis of bacterial cell-wall peptidoglycan. The chain is UDP-N-acetylmuramoyl-L-alanyl-D-glutamate--2,6-diaminopimelate ligase from Nostoc sp. (strain PCC 7120 / SAG 25.82 / UTEX 2576).